The following is a 148-amino-acid chain: DnaJ homolog subfamily C member 24 (148 aa).

Residues 10 to 81 (DWYSILGADP…ETKKKYDLQR (72 aa)) form the J domain. Residues 92–147 (VDAQVRLEEMSWNQGDESFFLSCRCGGKYTVSKDEAQEATLISCDACSLIVELLHQ) form the DPH-type MB domain. Positions 114, 116, 135, and 138 each coordinate Zn(2+).

This sequence belongs to the DPH4 family. Monomer and homooligomer. Iron binding promotes oligomerization. As to expression, detected in heart, brain, spleen, lung, liver, kidney and testis.

The protein localises to the cytoplasm. Its subcellular location is the cytoskeleton. It functions in the pathway protein modification; peptidyl-diphthamide biosynthesis. Its function is as follows. The iron-bound form is redox-active and can function as electron carrier. Stimulates the ATPase activity of several Hsp70-type chaperones. This ability is enhanced by iron-binding. Plays a role in the diphthamide biosynthesis, a post-translational modification of histidine which occurs in translation elongation factor 2 (EEF2). The protein is DnaJ homolog subfamily C member 24 (Dnajc24) of Mus musculus (Mouse).